A 211-amino-acid chain; its full sequence is Thymidylate kinase (211 aa).

An ATP-binding site is contributed by 11–18 (GPDGAGKT).

It belongs to the thymidylate kinase family.

It catalyses the reaction dTMP + ATP = dTDP + ADP. In terms of biological role, phosphorylation of dTMP to form dTDP in both de novo and salvage pathways of dTTP synthesis. The protein is Thymidylate kinase of Streptococcus pyogenes serotype M18 (strain MGAS8232).